The sequence spans 227 residues: YEATS domain-containing protein 4 (227 aa).

The region spanning Arg-15–Ser-158 is the YEATS domain. Lys-37 is covalently cross-linked (Glycyl lysine isopeptide (Lys-Gly) (interchain with G-Cter in SUMO2)). Residues Trp-93–Glu-97 form a diacetylated histone H3 binding region. Residues Leu-163–Ile-227 are interaction with MLLT10. Residues His-168 to Ile-227 form an interaction with TACC1 region. Residues Lys-178–Asp-226 are a coiled coil.

In terms of assembly, component of numerous complexes with chromatin remodeling and histone acetyltransferase activity. Component of the NuA4 histone acetyltransferase complex which contains the catalytic subunit KAT5/TIP60 and the subunits EP400, TRRAP/PAF400, BRD8/SMAP, EPC1, DMAP1/DNMAP1, RUVBL1/TIP49, RUVBL2, ING3, actin, ACTL6A/BAF53A, MORF4L1/MRG15, MORF4L2/MRGX, MRGBP, YEATS4/GAS41, VPS72/YL1 and MEAF6. The NuA4 complex interacts with MYC and the adenovirus E1A protein. Component of a NuA4-related complex which contains EP400, TRRAP/PAF400, SRCAP, BRD8/SMAP, EPC1, DMAP1/DNMAP1, RUVBL1/TIP49, RUVBL2, actin, ACTL6A/BAF53A, VPS72 and YEATS4/GAS41. Interacts with MLLT10/AF10. Also interacts with the SWI/SNF component SMARCB1/BAF47, TACC1 and TACC2, and the nuclear matrix protein NUMA1.

The protein resides in the nucleus. In terms of biological role, chromatin reader component of the NuA4 histone acetyltransferase (HAT) complex, a complex involved in transcriptional activation of select genes principally by acetylation of nucleosomal histones H4 and H2A. Specifically recognizes and binds acylated histone H3, with a preference for histone H3 diacetylated at 'Lys-18' and 'Lys-27' (H3K18ac and H3K27ac) or histone H3 diacetylated at 'Lys-14' and 'Lys-27' (H3K14ac and H3K27ac). Also able to recognize and bind crotonylated histone H3. May also recognize and bind histone H3 succinylated at 'Lys-122' (H3K122succ); additional evidences are however required to confirm this result in vivo. Plays a key role in histone variant H2AZ1/H2A.Z deposition into specific chromatin regions: recognizes and binds H3K14ac and H3K27ac on the promoters of actively transcribed genes and recruits NuA4-related complex to deposit H2AZ1/H2A.Z. H2AZ1/H2A.Z deposition is required for maintenance of embryonic stem cell. The sequence is that of YEATS domain-containing protein 4 from Mus musculus (Mouse).